The sequence spans 461 residues: Cysteine--tRNA ligase (461 aa).

Position 28 (Cys-28) interacts with Zn(2+). Residues 30 to 40 (VTIYDLCHIGH) carry the 'HIGH' region motif. Cys-209, His-234, and Glu-238 together coordinate Zn(2+). The 'KMSKS' region motif lies at 266–270 (KMSKS). Lys-269 serves as a coordination point for ATP.

The protein belongs to the class-I aminoacyl-tRNA synthetase family. Monomer. Zn(2+) is required as a cofactor.

The protein localises to the cytoplasm. It catalyses the reaction tRNA(Cys) + L-cysteine + ATP = L-cysteinyl-tRNA(Cys) + AMP + diphosphate. The sequence is that of Cysteine--tRNA ligase from Vibrio atlanticus (strain LGP32) (Vibrio splendidus (strain Mel32)).